Reading from the N-terminus, the 556-residue chain is MASKPAAGKSRGEKRKRVVLTLKEKIDICTRLEKGESRKALMQEYNVGMSTLYDIRAHKAQLLRFFASSDSNKALEQRRTLHTPKLEHLDRVLYEWFLGKRSEGVPVSGPMLIEKAKDFYEQMQLTEPCVFSGGWLWRFKARHGIKKLDASSEKQSADHQAAEQFCAFFRSLAAEHGLSAEQVYNADETGLFWRCLPNPTPEGGAVPGPKQGKDRLTVLMCANATGSHRLKPLAIGKCSGPRAFKGIQHLPVAYKAQGNAWVDKEIFSDWFHHIFVPSVREHFRTIGLPEDSKAVLLLDSSRAHPQEAELVSSNVFTIFLPASVASLVQPMEQGIRRDFMRNFINPPVPLQGPHARYNMNDAIFSVACAWNAVPSHVFRRAWRKLWPSVAFAEGSSSEEELEAECFPVKPHNKSFAHILELVKEGSSCPGQLRQRQAASWGVAGREAEGGRPPAATSPAEVVWSSEKTPKADQDGRGDPGEGEEVAWEQAAVAFDAVLRFAERQPCFSAQEVGQLRALRAVFRSQQQETVGLEDVVVTSPEELAIPKCCLEASTET.

The 52-residue stretch at 11–62 (RGEKRKRVVLTLKEKIDICTRLEKGESRKALMQEYNVGMSTLYDIRAHKAQL) folds into the HTH psq-type domain. 2 DNA-binding regions (H-T-H motif) span residues 38-58 (RKAL…IRAH) and 110-142 (PMLI…FKAR). One can recognise an HTH CENPB-type domain in the interval 77–149 (QRRTLHTPKL…KARHGIKKLD (73 aa)). In terms of domain architecture, DDE-1 spans 213 to 382 (KDRLTVLMCA…VPSHVFRRAW (170 aa)). The residue at position 414 (Ser414) is a Phosphoserine. A disordered region spans residues 439 to 482 (SWGVAGREAEGGRPPAATSPAEVVWSSEKTPKADQDGRGDPGEG). Positions 467–479 (KTPKADQDGRGDP) are enriched in basic and acidic residues.

This sequence belongs to the tigger transposable element derived protein family. Expressed ubiquitously.

It localises to the nucleus. In terms of biological role, may bind DNA. This is Jerky protein homolog from Homo sapiens (Human).